The sequence spans 366 residues: C-X-C chemokine receptor type 3 (366 aa).

Over 1–55 (MVPEMSERQEFQASDFAYLLENSSYDYGENETYFCCTSPPCPQDFSLNFDRTFLP) the chain is Extracellular. A glycan (N-linked (GlcNAc...) asparagine) is linked at asparagine 22. Tyrosine 25 and tyrosine 27 each carry sulfotyrosine. Asparagine 30 carries an N-linked (GlcNAc...) asparagine glycan. A helical membrane pass occupies residues 56–76 (VLYSLLFVLGLLGNGIVAVVL). At 77-88 (LSQRAALSSTDT) the chain is on the cytoplasmic side. The helical transmembrane segment at 89 to 109 (FLLHLAVADALLVLTLPLWAV) threads the bilayer. At 110–124 (DAAIQWVFGSGLCKV) the chain is on the extracellular side. A disulfide bridge connects residues cysteine 122 and cysteine 201. A helical membrane pass occupies residues 125–145 (AGALFNINFYAGALLLACISF). Over 146–167 (DRYLSIVHATQLYRRGPPTRVA) the chain is Cytoplasmic. A helical transmembrane segment spans residues 168-188 (LTCVAVWGLCLLFALPDFIFL). Topologically, residues 189–221 (SSHHDNRLNATHCQYNFPQEGHTALRILQLVAG) are extracellular. Residue asparagine 197 is glycosylated (N-linked (GlcNAc...) asparagine). A helical transmembrane segment spans residues 222 to 242 (FLLPLLVMAYCYARILAVLLV). Over 243–254 (SRGQRRLRAMRL) the chain is Cytoplasmic. The helical transmembrane segment at 255 to 275 (VVVVVVAFALCWTPYHLVVLV) threads the bilayer. The Extracellular segment spans residues 276 to 299 (DTLMDLGALARNCGRESSVDIAKS). The helical transmembrane segment at 300–320 (VTSGMGYMHCCLNPLLYAFVG) threads the bilayer. Residues 321–366 (VKFRERMWVLLVRLGCPDQRCHQRQPSASRRESSWSETTEASYSGL) lie on the Cytoplasmic side of the membrane. The tract at residues 341–366 (CHQRQPSASRRESSWSETTEASYSGL) is disordered. A compositionally biased stretch (low complexity) spans 355–366 (WSETTEASYSGL).

Belongs to the G-protein coupled receptor 1 family. In terms of assembly, homomer. Forms heteromers with ACKR4. Interacts with PF4/CXCL4. In terms of processing, sulfation on Tyr-25 and Tyr-27 is essential for CXCL10 binding. N-glycosylated.

Its subcellular location is the cell membrane. Receptor for the C-X-C chemokine CXCL9, CXCL10 and CXCL11 and mediates the proliferation, survival and angiogenic activity of mesangial cells through a heterotrimeric G-protein signaling pathway. Probably promotes cell chemotaxis response. Binds to CCL21. Upon activation by PF4, induces activated T-lymphocytes migration mediated via downstream Ras/extracellular signal-regulated kinase (ERK) signaling. The polypeptide is C-X-C chemokine receptor type 3 (CXCR3) (Bos taurus (Bovine)).